The sequence spans 639 residues: Threonine--tRNA ligase (639 aa).

Residues 1 to 61 form the TGS domain; it reads MIHITLPDGS…TQDSPLSIVT (61 aa). The tract at residues 242–533 is catalytic; that stretch reads DHRKLGRELD…LIEEHAGALP (292 aa). Cys333, His384, and His510 together coordinate Zn(2+).

The protein belongs to the class-II aminoacyl-tRNA synthetase family. As to quaternary structure, homodimer. The cofactor is Zn(2+).

Its subcellular location is the cytoplasm. The catalysed reaction is tRNA(Thr) + L-threonine + ATP = L-threonyl-tRNA(Thr) + AMP + diphosphate + H(+). In terms of biological role, catalyzes the attachment of threonine to tRNA(Thr) in a two-step reaction: L-threonine is first activated by ATP to form Thr-AMP and then transferred to the acceptor end of tRNA(Thr). Also edits incorrectly charged L-seryl-tRNA(Thr). This chain is Threonine--tRNA ligase, found in Acidovorax ebreus (strain TPSY) (Diaphorobacter sp. (strain TPSY)).